The primary structure comprises 156 residues: Small ribosomal subunit protein uS7 (156 aa).

This sequence belongs to the universal ribosomal protein uS7 family. Part of the 30S ribosomal subunit. Contacts proteins S9 and S11.

Functionally, one of the primary rRNA binding proteins, it binds directly to 16S rRNA where it nucleates assembly of the head domain of the 30S subunit. Is located at the subunit interface close to the decoding center, probably blocks exit of the E-site tRNA. In Deinococcus radiodurans (strain ATCC 13939 / DSM 20539 / JCM 16871 / CCUG 27074 / LMG 4051 / NBRC 15346 / NCIMB 9279 / VKM B-1422 / R1), this protein is Small ribosomal subunit protein uS7.